Reading from the N-terminus, the 525-residue chain is GMP synthase [glutamine-hydrolyzing] (525 aa).

One can recognise a Glutamine amidotransferase type-1 domain in the interval 9–207; it reads RILILDFGSQ…VLEISGCEAL (199 aa). Residue Cys86 is the Nucleophile of the active site. Active-site residues include His181 and Glu183. The GMPS ATP-PPase domain maps to 208-400; the sequence is WTPANIVEDA…LGLPYDMVYR (193 aa). An ATP-binding site is contributed by 235–241; the sequence is SGGVDSS.

Homodimer.

The enzyme catalyses XMP + L-glutamine + ATP + H2O = GMP + L-glutamate + AMP + diphosphate + 2 H(+). The protein operates within purine metabolism; GMP biosynthesis; GMP from XMP (L-Gln route): step 1/1. Functionally, catalyzes the synthesis of GMP from XMP. The sequence is that of GMP synthase [glutamine-hydrolyzing] from Ectopseudomonas mendocina (strain ymp) (Pseudomonas mendocina).